The following is a 387-amino-acid chain: 1-deoxy-D-xylulose 5-phosphate reductoisomerase (387 aa).

Thr11, Gly12, Ser13, Ile14, Gly37, Arg38, Asn39, and Asn125 together coordinate NADPH. Lys126 contributes to the 1-deoxy-D-xylulose 5-phosphate binding site. Glu127 is a binding site for NADPH. Asp151 is a binding site for Mn(2+). Ser152, Glu153, Ser177, and His200 together coordinate 1-deoxy-D-xylulose 5-phosphate. Glu153 lines the Mn(2+) pocket. Gly206 contributes to the NADPH binding site. 1-deoxy-D-xylulose 5-phosphate-binding residues include Ser213, Asn218, Lys219, and Glu222. Residue Glu222 participates in Mn(2+) binding.

It belongs to the DXR family. It depends on Mg(2+) as a cofactor. The cofactor is Mn(2+).

The catalysed reaction is 2-C-methyl-D-erythritol 4-phosphate + NADP(+) = 1-deoxy-D-xylulose 5-phosphate + NADPH + H(+). Its pathway is isoprenoid biosynthesis; isopentenyl diphosphate biosynthesis via DXP pathway; isopentenyl diphosphate from 1-deoxy-D-xylulose 5-phosphate: step 1/6. In terms of biological role, catalyzes the NADPH-dependent rearrangement and reduction of 1-deoxy-D-xylulose-5-phosphate (DXP) to 2-C-methyl-D-erythritol 4-phosphate (MEP). This is 1-deoxy-D-xylulose 5-phosphate reductoisomerase from Desulforamulus reducens (strain ATCC BAA-1160 / DSM 100696 / MI-1) (Desulfotomaculum reducens).